Here is a 219-residue protein sequence, read N- to C-terminus: Ras-related protein Rab-3D (219 aa).

Ala2 bears the N-acetylalanine mark. Residue 29-37 participates in GDP binding; it reads GNSSVGKTS. Residues Ser31, Ser32, Val33, Gly34, Lys35, Thr36, Ser37, Pro49, and Ser53 each contribute to the GTP site. Thr36 serves as a coordination point for Mg(2+). A Switch 1 motif is present at residues 49-58; sequence PAFVSTVGID. Residues Thr54 and Asp77 each coordinate Mg(2+). GTP is bound at residue Gly80. A Switch 2 motif is present at residues 80–96; it reads GQERYRTITTAYYRGAM. Thr86 is subject to Phosphothreonine; by LRRK2. Asn135, Lys136, Asp138, Ala166, and Lys167 together coordinate GTP. GDP-binding positions include 135-138 and 165-167; these read NKCD and SAK. Phosphoserine is present on Ser190. Residues 190–219 form a disordered region; that stretch reads SLEPSSSPGSNGKGPALGDTPPPQPSSCSC. Low complexity predominate over residues 193–203; it reads PSSSPGSNGKG. Pro residues predominate over residues 209–219; that stretch reads TPPPQPSSCSC. Residues Cys217 and Cys219 are each lipidated (S-geranylgeranyl cysteine). At Cys219 the chain carries Cysteine methyl ester.

The protein belongs to the small GTPase superfamily. Rab family. Interacts with RIMS1, RIMS2, RPH3A, RPH3AL and RAB3IP. The GTP-bound form interacts with REP15. Interacts with CHM and CHML; phosphorylation at Thr-86 disrupts these interactions. Interacts with MADD (via uDENN domain); the GTP-bound form is preferred for interaction. Mg(2+) is required as a cofactor. In terms of processing, phosphorylation of Thr-86 in the switch II region by LRRK2 prevents the association of RAB regulatory proteins, including CHM and CHML. Predominantly expressed in the adipocyte tissue, but is also expressed in several other organs including skin, spleen, heart and lung.

The protein resides in the cell membrane. It catalyses the reaction GTP + H2O = GDP + phosphate + H(+). With respect to regulation, regulated by guanine nucleotide exchange factors (GEFs) which promote the exchange of bound GDP for free GTP. Regulated by GTPase activating proteins (GAPs) which increase the GTP hydrolysis activity. Inhibited by GDP dissociation inhibitors (GDIs) which prevent Rab-GDP dissociation. Functionally, the small GTPases Rab are key regulators of intracellular membrane trafficking, from the formation of transport vesicles to their fusion with membranes. Rabs cycle between an inactive GDP-bound form and an active GTP-bound form that is able to recruit to membranes different sets of downstream effectors directly responsible for vesicle formation, movement, tethering and fusion. RAB3D may be involved in the insulin-induced exocytosis of GLUT4-containing vesicles in adipocytes. The protein is Ras-related protein Rab-3D of Mus musculus (Mouse).